An 85-amino-acid polypeptide reads, in one-letter code: Small ribosomal subunit protein bS20 (85 aa).

It belongs to the bacterial ribosomal protein bS20 family.

Its function is as follows. Binds directly to 16S ribosomal RNA. This chain is Small ribosomal subunit protein bS20, found in Borrelia turicatae (strain 91E135).